Consider the following 819-residue polypeptide: Myosin light chain kinase 3 (819 aa).

Disordered stretches follow at residues 146–256 (VPWR…TPSE), 273–334 (VVSP…TPPR), and 347–462 (EMLM…EQDC). Ser152 carries the phosphoserine modification. 2 stretches are compositionally biased toward basic and acidic residues: residues 158–170 (EENKERVEEEGGK) and 183–196 (DAREPGEESQKADV). Residues 307–318 (GPGPQCPGPPGL) are compositionally biased toward pro residues. 3 positions are modified to phosphoserine: Ser355, Ser401, and Ser408. The region spanning 515-770 (VCQHEVLGGG…ATQCLKHEWL (256 aa)) is the Protein kinase domain. ATP-binding positions include 521–529 (LGGGRFGQV) and Lys544. The active-site Proton acceptor is the Asp636.

This sequence belongs to the protein kinase superfamily. CAMK Ser/Thr protein kinase family. Requires Mg(2+) as cofactor. In terms of processing, phosphorylated on serine residues. Restricted to heart.

The protein localises to the cytoplasm. The catalysed reaction is L-seryl-[myosin light chain] + ATP = O-phospho-L-seryl-[myosin light chain] + ADP + H(+). It carries out the reaction L-threonyl-[myosin light chain] + ATP = O-phospho-L-threonyl-[myosin light chain] + ADP + H(+). Kinase that phosphorylates MYL2 in vitro. Promotes sarcomere formation in cardiomyocytes and increases cardiomyocyte contractility. The chain is Myosin light chain kinase 3 (MYLK3) from Homo sapiens (Human).